The following is a 112-amino-acid chain: Cuticle protein AM1239 (112 aa).

The region spanning 16-85 (DGNFNYRFET…FIPTDHPLPA (70 aa)) is the Chitin-binding type R&amp;R domain. An O-linked (HexNAc) threonine glycan is attached at threonine 79.

Arthrodial membrane.

The chain is Cuticle protein AM1239 from Cancer pagurus (Rock crab).